We begin with the raw amino-acid sequence, 192 residues long: Ras-like GTP-binding protein rhoA (192 aa).

Residue 12–19 (GDGACGKT) participates in GTP binding. The Effector region motif lies at 34–42 (YVPTVFENY). Residues 59–63 (DTAGQ) and 117–120 (NKRD) contribute to the GTP site. At cysteine 189 the chain carries Cysteine methyl ester. The S-geranylgeranyl cysteine moiety is linked to residue cysteine 189. Residues 190–192 (MIL) constitute a propeptide, removed in mature form.

The protein belongs to the small GTPase superfamily. Rho family. May interact with unc-89 (via DN and PH domains). Interacts with bli-3 and memo-1. In terms of tissue distribution, in larvae and adults, enriched at the tip of the head where the anterior sensory organ is located and in the pharyngeal nerve ring (at protein level). In embryos, enriched at the boundaries of dorsal cells undergoing intercalation, ventral enclosure and elongation.

The protein resides in the cell membrane. Its subcellular location is the cytoplasm. It is found in the cytoskeleton. It localises to the cell cortex. Its activity is regulated as follows. GTP hydrolysis is stimulated by unc-89. In terms of biological role, required for ventral migration of epidermal cells during ventral enclosure in the embryo and for cell elongation. Also required for ventral migration of P cells during larval development. Involved in asymmetric spindle positioning during anaphase and establishment of cell polarity during embryo development. In adults, involved in regulation of multiple processes including locomotion, pharyngeal pumping, fecundity, ovulation, defecation and body morphology. In body wall muscles, regulates organization of myosin thick filaments downstream of unc-89. Association with the oxidase bli-3 promotes ROS production and this interaction may be modulated by memo-1, in order to control the oxidative stress response and longevity. The chain is Ras-like GTP-binding protein rhoA from Caenorhabditis elegans.